Reading from the N-terminus, the 485-residue chain is Aspartyl/glutamyl-tRNA(Asn/Gln) amidotransferase subunit B (485 aa).

This sequence belongs to the GatB/GatE family. GatB subfamily. As to quaternary structure, heterotrimer of A, B and C subunits.

The catalysed reaction is L-glutamyl-tRNA(Gln) + L-glutamine + ATP + H2O = L-glutaminyl-tRNA(Gln) + L-glutamate + ADP + phosphate + H(+). The enzyme catalyses L-aspartyl-tRNA(Asn) + L-glutamine + ATP + H2O = L-asparaginyl-tRNA(Asn) + L-glutamate + ADP + phosphate + 2 H(+). Functionally, allows the formation of correctly charged Asn-tRNA(Asn) or Gln-tRNA(Gln) through the transamidation of misacylated Asp-tRNA(Asn) or Glu-tRNA(Gln) in organisms which lack either or both of asparaginyl-tRNA or glutaminyl-tRNA synthetases. The reaction takes place in the presence of glutamine and ATP through an activated phospho-Asp-tRNA(Asn) or phospho-Glu-tRNA(Gln). The protein is Aspartyl/glutamyl-tRNA(Asn/Gln) amidotransferase subunit B of Methylacidiphilum infernorum (isolate V4) (Methylokorus infernorum (strain V4)).